We begin with the raw amino-acid sequence, 932 residues long: RNA-binding protein 12 (932 aa).

The tract at residues 97 to 116 (IPPANASRSGPPPSSGMSGR) is disordered. The span at 98-116 (PPANASRSGPPPSSGMSGR) shows a compositional bias: low complexity. The RRM 1 domain occupies 304–379 (LYVSVHGMPF…RYVEVSPATE (76 aa)). 2 positions are modified to phosphoserine: Ser352 and Ser375. 2 stretches are compositionally biased toward polar residues: residues 392–401 (KQNMGPSGQT) and 408–417 (LPRSKSPSGQ). The disordered stretch occupies residues 392 to 424 (KQNMGPSGQTHPPPQTLPRSKSPSGQKRSRSRS). Phosphoserine is present on residues Ser420, Ser422, and Ser424. An RRM 2 domain is found at 430 to 507 (FCVYLKGLPF…RFIQVHPITK (78 aa)). A Phosphoserine modification is found at Ser525. Low complexity predominate over residues 717–734 (NGPPFNFPGNFGGSNAFG). The interval 717–855 (NGPPFNFPGN…PGFASSSGKP (139 aa)) is disordered. The span at 783–811 (SGFGGGPQNFGNGPGSLGGPPGFGSGPPG) shows a compositional bias: gly residues. Over residues 824–838 (AFGPGPGPGPGPGPG) the composition is skewed to pro residues. Residues 856 to 932 (GPTVIKVQNM…PIGSRKVNLY (77 aa)) enclose the RRM 3 domain.

It localises to the nucleus. The chain is RNA-binding protein 12 (RBM12) from Pongo abelii (Sumatran orangutan).